The sequence spans 318 residues: 26 kDa endochitinase 1 (318 aa).

The signal sequence occupies residues 1 to 19 (MRAFVLFAVVAMAATMAVA). The Chitin-binding type-1 domain maps to 20–59 (EQCGSQAGGATCPNCLCCSRFGWCGSTPYCGDGCQSQCSG). Disulfide bonds link Cys22–Cys37, Cys31–Cys43, Cys36–Cys49, Cys53–Cys57, Cys98–Cys160, Cys172–Cys180, and Cys279–Cys311. Glu142 acts as the Proton donor in catalysis.

The protein belongs to the glycosyl hydrolase 19 family. Chitinase class I subfamily.

The catalysed reaction is Random endo-hydrolysis of N-acetyl-beta-D-glucosaminide (1-&gt;4)-beta-linkages in chitin and chitodextrins.. Functionally, defense against chitin-containing fungal pathogens. This Hordeum vulgare (Barley) protein is 26 kDa endochitinase 1.